Consider the following 413-residue polypeptide: Tyrosine--tRNA ligase 2 (413 aa).

Residues 58 to 67 (PSAPDVHLGH) carry the 'HIGH' region motif. 2 repeat units span residues 89 to 94 (GDFTGK) and 96 to 101 (GDPTGK). Residues 89–101 (GDFTGKIGDPTGK) form a 2 X 6 AA tandem repeats region. Residues 242 to 246 (KMSKS) carry the 'KMSKS' region motif. Residue K245 participates in ATP binding. The region spanning 353 to 413 (IAMIDLLVKL…VGKRKFLKLQ (61 aa)) is the S4 RNA-binding domain.

This sequence belongs to the class-I aminoacyl-tRNA synthetase family. TyrS type 2 subfamily. Homodimer.

The protein localises to the cytoplasm. The enzyme catalyses tRNA(Tyr) + L-tyrosine + ATP = L-tyrosyl-tRNA(Tyr) + AMP + diphosphate + H(+). Catalyzes the attachment of tyrosine to tRNA(Tyr) in a two-step reaction: tyrosine is first activated by ATP to form Tyr-AMP and then transferred to the acceptor end of tRNA(Tyr). The sequence is that of Tyrosine--tRNA ligase 2 from Bacillus subtilis (strain 168).